The primary structure comprises 129 residues: UPF0325 protein PC1_0937 (129 aa).

This sequence belongs to the UPF0325 family.

This is UPF0325 protein PC1_0937 from Pectobacterium carotovorum subsp. carotovorum (strain PC1).